Reading from the N-terminus, the 93-residue chain is YcgL domain-containing protein Shew_2183 (93 aa).

In terms of domain architecture, YcgL spans 1 to 85; the sequence is MICAVYKSRL…PPVNLLEEYK (85 aa).

This Shewanella loihica (strain ATCC BAA-1088 / PV-4) protein is YcgL domain-containing protein Shew_2183.